A 115-amino-acid polypeptide reads, in one-letter code: Aspartate 1-decarboxylase (115 aa).

The Schiff-base intermediate with substrate; via pyruvic acid role is filled by serine 25. A Pyruvic acid (Ser) modification is found at serine 25. Threonine 57 is a substrate binding site. Tyrosine 58 acts as the Proton donor in catalysis. Residue 72-74 (GAA) coordinates substrate.

This sequence belongs to the PanD family. In terms of assembly, heterooctamer of four alpha and four beta subunits. Pyruvate is required as a cofactor. In terms of processing, is synthesized initially as an inactive proenzyme, which is activated by self-cleavage at a specific serine bond to produce a beta-subunit with a hydroxyl group at its C-terminus and an alpha-subunit with a pyruvoyl group at its N-terminus.

Its subcellular location is the cytoplasm. It catalyses the reaction L-aspartate + H(+) = beta-alanine + CO2. It participates in cofactor biosynthesis; (R)-pantothenate biosynthesis; beta-alanine from L-aspartate: step 1/1. In terms of biological role, catalyzes the pyruvoyl-dependent decarboxylation of aspartate to produce beta-alanine. In Campylobacter fetus subsp. fetus (strain 82-40), this protein is Aspartate 1-decarboxylase.